The sequence spans 181 residues: Transcriptional repressor NrdR (181 aa).

A zinc finger spans residues 3-34 (CPYCQHTDSRVLESRSTGAGRSIRRRRECLSC). The ATP-cone domain maps to 49-139 (ISVIKRNGQS…VYRQFQGVDD (91 aa)).

Belongs to the NrdR family. Zn(2+) is required as a cofactor.

Its function is as follows. Negatively regulates transcription of bacterial ribonucleotide reductase nrd genes and operons by binding to NrdR-boxes. In Picosynechococcus sp. (strain ATCC 27264 / PCC 7002 / PR-6) (Agmenellum quadruplicatum), this protein is Transcriptional repressor NrdR.